Reading from the N-terminus, the 205-residue chain is tRNA (guanine-N(7)-)-methyltransferase (205 aa).

Residues Glu34, Glu59, Asp86, and Asp107 each coordinate S-adenosyl-L-methionine. Asp107 is a catalytic residue. Lys111 contacts substrate. Residues 113–118 (RHEKRR) are interaction with RNA. Residues Asp144 and 182-185 (TGYE) each bind substrate.

The protein belongs to the class I-like SAM-binding methyltransferase superfamily. TrmB family.

It catalyses the reaction guanosine(46) in tRNA + S-adenosyl-L-methionine = N(7)-methylguanosine(46) in tRNA + S-adenosyl-L-homocysteine. It functions in the pathway tRNA modification; N(7)-methylguanine-tRNA biosynthesis. Catalyzes the formation of N(7)-methylguanine at position 46 (m7G46) in tRNA. This chain is tRNA (guanine-N(7)-)-methyltransferase, found in Mycoplasmopsis synoviae (strain 53) (Mycoplasma synoviae).